The following is a 96-amino-acid chain: Large ribosomal subunit protein eL21 (96 aa).

Belongs to the eukaryotic ribosomal protein eL21 family.

The polypeptide is Large ribosomal subunit protein eL21 (Methanoregula boonei (strain DSM 21154 / JCM 14090 / 6A8)).